Consider the following 639-residue polypeptide: Phosphatidylinositol 3,4,5-trisphosphate 3-phosphatase cnrN (639 aa).

The Phosphatase tensin-type domain occupies 20–190 (FKSKEMDLDL…NYFKEIVSGS (171 aa)). Catalysis depends on Cys-129, which acts as the Phosphocysteine intermediate. Residues 195-350 (EFVLTFRSIE…LQMECRFQNN (156 aa)) enclose the C2 tensin-type domain. Disordered stretches follow at residues 243–265 (INND…NNNN), 395–429 (NNIL…HSTP), 451–498 (SSSG…SCSS), 519–567 (NNNN…RKRK), and 598–628 (FTKK…DPSE). Composition is skewed to low complexity over residues 244–265 (NNDN…NNNN), 395–424 (NNIL…LPSS), 458–486 (NSSR…SRSS), and 519–554 (NNNN…SNSN). Residues 598–608 (FTKKINPNNNE) are compositionally biased toward polar residues. The segment covering 619 to 628 (LKKETNDPSE) has biased composition (basic and acidic residues).

Requires Mg(2+) as cofactor.

The catalysed reaction is a 1,2-diacyl-sn-glycero-3-phospho-(1D-myo-inositol-3,4,5-trisphosphate) + H2O = a 1,2-diacyl-sn-glycero-3-phospho-(1D-myo-inositol-4,5-bisphosphate) + phosphate. In terms of biological role, protein phosphatase that negatively regulates PI3K-dependent pathways. Regulates cAMP signal transduction to control territory size. During development, a lawn of Dictyostelium cells breaks up into territories where cells aggregate in dendritic streams to form groups of 20'000 cells. The protein is Phosphatidylinositol 3,4,5-trisphosphate 3-phosphatase cnrN (cnrN) of Dictyostelium discoideum (Social amoeba).